Consider the following 659-residue polypeptide: Interferon-induced GTP-binding protein Mx1 (659 aa).

N-acetylmethionine is present on M1. A disordered region spans residues 1–40 (MVNSKGEITDSDPGSNHLLLNGLPDKAGKNQDTEPENSLC). The 274-residue stretch at 65-338 (DLALPAIAVI…LITHICKTLP (274 aa)) folds into the Dynamin-type G domain. Positions 75 to 82 (GDQSSGKS) are G1 motif. Position 75–82 (75–82 (GDQSSGKS)) interacts with GTP. Residues 100–102 (VTR) form a G2 motif region. Positions 176–179 (DLPG) are G3 motif. Residues 176–180 (DLPGI) and 245–248 (TKPD) contribute to the GTP site. The G4 motif stretch occupies residues 245-248 (TKPD). Residues 277–280 (KCRG) form a G5 motif region. The interval 339–364 (LLENQIKENHEKITEELKKYGSDVPE) is bundle signaling element (BSE). The middle domain stretch occupies residues 364–531 (EEEHEKMFFL…HFQMEQIVYC (168 aa)). The stalk stretch occupies residues 365–629 (EEHEKMFFLI…KDTYNWLLKE (265 aa)). The interval 552-555 (KNKK) is critical for lipid-binding. The 89-residue stretch at 571–659 (LSEIFEHLLA…ARRRLAKFPG (89 aa)) folds into the GED domain.

The protein belongs to the TRAFAC class dynamin-like GTPase superfamily. Dynamin/Fzo/YdjA family. Homooligomer. Oligomerizes into multimeric filamentous or ring-like structures by virtue of its stalk domain. Oligomerization is critical for GTPase activity, protein stability, and recognition of viral target structures. Interacts with TRPC1, TRPC3, TRPC4, TRPC5, TRPC6 and TRPC7. Interacts with HSPA5. Interacts with TUBB/TUBB5. Interacts with DDX39A and DDX39B. In terms of processing, ISGylated.

It is found in the cytoplasm. The protein localises to the endoplasmic reticulum membrane. The protein resides in the perinuclear region. In terms of biological role, interferon-induced dynamin-like GTPase with antiviral activity. In Phoca vitulina (Harbor seal), this protein is Interferon-induced GTP-binding protein Mx1 (MX1).